An 88-amino-acid polypeptide reads, in one-letter code: Putative membrane protein insertion efficiency factor (88 aa).

Residues 68–88 are disordered; sequence VPPPNSDTRARGEADARSHRL. The segment covering 75 to 88 has biased composition (basic and acidic residues); the sequence is TRARGEADARSHRL.

This sequence belongs to the UPF0161 family.

Its subcellular location is the cell inner membrane. Its function is as follows. Could be involved in insertion of integral membrane proteins into the membrane. This chain is Putative membrane protein insertion efficiency factor, found in Burkholderia orbicola (strain MC0-3).